A 147-amino-acid polypeptide reads, in one-letter code: Small ribosomal subunit protein uS12 (147 aa).

Belongs to the universal ribosomal protein uS12 family. Part of the 30S ribosomal subunit.

With S4 and S5 plays an important role in translational accuracy. Located at the interface of the 30S and 50S subunits. This is Small ribosomal subunit protein uS12 from Methanococcus vannielii (strain ATCC 35089 / DSM 1224 / JCM 13029 / OCM 148 / SB).